The following is a 296-amino-acid chain: Phosphatidylglycerol--prolipoprotein diacylglyceryl transferase (296 aa).

4 consecutive transmembrane segments (helical) span residues 10–30 (IAFS…LAAF), 57–77 (LLFY…MLFY), 92–112 (VWEG…ACWL), and 119–139 (LHFF…LGFG). R140 is a binding site for a 1,2-diacyl-sn-glycero-3-phospho-(1'-sn-glycerol). 3 helical membrane-spanning segments follow: residues 194 to 214 (QLYE…TFSM), 220 to 240 (YAVS…VEFV), and 254 to 274 (WLTM…VLLA).

The protein belongs to the Lgt family.

The protein localises to the cell inner membrane. The enzyme catalyses L-cysteinyl-[prolipoprotein] + a 1,2-diacyl-sn-glycero-3-phospho-(1'-sn-glycerol) = an S-1,2-diacyl-sn-glyceryl-L-cysteinyl-[prolipoprotein] + sn-glycerol 1-phosphate + H(+). It functions in the pathway protein modification; lipoprotein biosynthesis (diacylglyceryl transfer). Functionally, catalyzes the transfer of the diacylglyceryl group from phosphatidylglycerol to the sulfhydryl group of the N-terminal cysteine of a prolipoprotein, the first step in the formation of mature lipoproteins. This is Phosphatidylglycerol--prolipoprotein diacylglyceryl transferase from Xanthomonas axonopodis pv. citri (strain 306).